Consider the following 7182-residue polypeptide: Replicase polyprotein 1ab (7182 aa).

Residues 54–174 (YDNHVKIDCR…HKWFQFCRLY (121 aa)) enclose the CoV Nsp1 globular domain. The BetaCoV Nsp1 C-terminal domain maps to 192-222 (FSVEDAYAEVHAEPKGKYSQKAYALLRQYRG). Residues 226–488 (VLFVDQYGCD…LITHALYLDY (263 aa)) enclose the CoV Nsp2 N-terminal domain. Zn(2+)-binding residues include cysteine 365, cysteine 370, cysteine 386, and cysteine 389. The interval 365-389 (CFNDNCDFYGWVSGNMMDGFSCPLC) is C4. A CoV Nsp2 middle domain is found at 493–681 (CGNLEQNHIL…VNKFYTFFKL (189 aa)). The CoV Nsp2 C-terminal domain maps to 697–809 (LKTINGLVCI…LDQAWRFPCA (113 aa)). Residues 811-923 (RKVNFNEKPV…MYCTFAIEDV (113 aa)) enclose the Ubiquitin-like 1 domain. 14 repeat units span residues 945 to 954 (NDDEDVVTGD), 955 to 964 (NDDEDVVTGD), 965 to 974 (NDDEDVVTGD), 975 to 984 (NDDEDVVTGD), 985 to 994 (NDDEDVVTGD), 995 to 1004 (NDDEDVVTGD), 1005 to 1014 (NDDEDVVTGD), 1015 to 1024 (NDDEDVVTGD), 1025 to 1034 (NDDEDVVTGD), 1035 to 1044 (NDDEDVVTGD), 1045 to 1054 (NDDEDVVTGD), 1055 to 1064 (NDDEDVVTGD), 1065 to 1074 (NDDEDVVTGD), and 1075 to 1084 (NDDEDVVTGD). Positions 945 to 1084 (NDDEDVVTGD…NDDEDVVTGD (140 aa)) are 14 X 10 AA tandem repeat of N-[DN]-D-E-D-V-V-T-G-D. The disordered stretch occupies residues 946–1064 (DDEDVVTGDN…NDDEDVVTGD (119 aa)). In terms of domain architecture, Peptidase C16 1 spans 1123–1373 (VFNDVYNDAL…VCFVKGDIIN (251 aa)). Cysteine 1161 (for PL1-PRO activity) is an active-site residue. 4 residues coordinate Zn(2+): cysteine 1238, cysteine 1241, cysteine 1264, and cysteine 1266. Residues 1238–1266 (CLKCGFSFDLNGLDALFFYGDIVSHVCKC) form a C4-type 1 zinc finger. Residues histidine 1312 and aspartate 1323 each act as for PL1-PRO activity in the active site. In terms of domain architecture, Macro spans 1351 to 1522 (ELPQLYGLCI…IIQKCQITSV (172 aa)). The DPUP domain maps to 1578 to 1649 (NDVRDYLLSK…TVNQVCVLLA (72 aa)). The 56-residue stretch at 1649–1704 (AKKIDVLLTVDGVNFKSISLTVGEVFGKILGNVFCDGIDVTKLKCSDFYADKILYQ) folds into the Ubiquitin-like 2 domain. The 261-residue stretch at 1718–1978 (SSFGFDQQQL…MVAYNPDLSQ (261 aa)) folds into the Peptidase C16 2 domain. Residue cysteine 1757 is the For PL2-PRO activity of the active site. Zn(2+) contacts are provided by cysteine 1835, cysteine 1837, cysteine 1869, and cysteine 1871. Residues 1835–1871 (CDCGIKQESRVGVDAVMHFGTLAKTDLFNGYKIGCNC) form a C4-type 2 zinc finger. Residues histidine 1914 and aspartate 1928 each act as for PL2-PRO activity in the active site. The Nucleic acid-binding domain occupies 1992-2093 (IKAQFKPFAK…TYFNKPSFKS (102 aa)). The region spanning 2108–2257 (ESQGNVVTSV…NDKTIFYTTE (150 aa)) is the G2M domain. The next 3 helical transmembrane spans lie at 2226 to 2246 (AIEFYGFLKWLFIYVFSLLHF), 2287 to 2307 (FLVVATVFLFWFNFLYINVIF), and 2318 to 2338 (FPIFVGRIVMWIKATFGLVTI). The tract at residues 2226-2463 (AIEFYGFLKW…FVLLRFYIVV (238 aa)) is HD1. A 3Ecto domain is found at 2323-2384 (GRIVMWIKAT…AIDFVQYEVD (62 aa)). Intrachain disulfides connect cysteine 2339-cysteine 2363 and cysteine 2354-cysteine 2360. Transmembrane regions (helical) follow at residues 2401-2421 (LVIGYSLYTVWFYPLFCLIGL) and 2443-2463 (FIVFVANMLPAFVLLRFYIVV). The segment at 2471–2561 (GFIRHIVYGC…ELKRPVNPTD (91 aa)) is Y1. The CoV Nsp3 Y domain maps to 2471-2838 (GFIRHIVYGC…LTTPFSLKGG (368 aa)). Residues histidine 2475, cysteine 2480, cysteine 2485, cysteine 2488, cysteine 2521, histidine 2524, cysteine 2528, and cysteine 2531 each coordinate Zn(2+). Residues 2475-2488 (HIVYGCNKAGCLFC) form a ZF1 region. The interval 2521 to 2531 (CVKHQWNCFNC) is ZF2. The interval 2562–2654 (ASHYVVTDIK…LVDKKLITTA (93 aa)) is Y2. The interval 2562–2838 (ASHYVVTDIK…LTTPFSLKGG (277 aa)) is coV-Y. The tract at residues 2655–2737 (CNGISVTQTM…KSMISAVAAG (83 aa)) is Y3. The tract at residues 2738–2838 (LEFTDENYNN…LTTPFSLKGG (101 aa)) is Y4. 5 consecutive transmembrane segments (helical) span residues 2844-2864 (LLYILFFVSLICFILLWALLP), 3119-3139 (ASSIFGAILAIVVVLVFYYLI), 3151-3171 (VVVINVVVWCINFLMLFVFQV), 3178-3198 (VYACFYFYVTLYFPSEISVIM), and 3203-3223 (IVMYGAIMPFWFCVTYVAMVI). An HD2 region spans residues 2844-3223 (LLYILFFVSL…FCVTYVAMVI (380 aa)). One can recognise a Nsp4C domain in the interval 3237–3334 (IGVNVCSDST…TASVSTSFLQ (98 aa)). Residues 3335 to 3637 (SGIVKMVSPT…YQQLAGVKLQ (303 aa)) enclose the Peptidase C30 domain. Catalysis depends on for 3CL-PRO activity residues histidine 3375 and cysteine 3479. A run of 7 helical transmembrane segments spans residues 3651–3671 (ILISTFLFSCIISAFVKWTIF), 3676–3696 (THMIGVTLCVLCFVSFMMLLV), 3701–3721 (FYLTMYIIPVLCTLFYVNYLV), 3744–3764 (FTYVYEVFYGCILCVFAIFIT), 3772–3792 (IFSLMFLVGRIVTLISMWYFG), 3800–3820 (LLFITAFLGTYTWTTILSLAI), and 3843–3863 (LILLSYLFIGYILSCYWGFFS). An HD3 region spans residues 3651–3863 (ILISTFLFSC…ILSCYWGFFS (213 aa)). The RdRp Nsp7 cofactor domain maps to 3925 to 4013 (SKLTDVKCAN…DYVQDSTVLQ (89 aa)). One can recognise a RdRp Nsp8 cofactor domain in the interval 4014–4210 (ALQSEFVNMA…YNEVANAVMQ (197 aa)). Positions 4211–4320 (NNELMPHKLK…GTLSSTIRLQ (110 aa)) constitute a Nsp9 ssRNA-binding domain. The ExoN/MTase coactivator domain maps to 4321 to 4458 (AGVATEYAAN…CVGSSVAVQS (138 aa)). Zn(2+) is bound by residues cysteine 4394, cysteine 4397, histidine 4403, cysteine 4410, cysteine 4436, cysteine 4439, cysteine 4447, and cysteine 4449. Zinc fingers lie at residues 4394-4410 (CIYCRARVEHPDVDGIC) and 4436-4449 (CQVCGFWRDGSCSC). A NiRAN domain is found at 4463-4718 (FLNRVRGTSV…DCELFVNDSY (256 aa)). 2 residues coordinate Mn(2+): asparagine 4666 and aspartate 4675. One can recognise a Nsp12 Interface domain in the interval 4719–4817 (RQFDLVQYDF…MNLDVDTHRY (99 aa)). Zn(2+) contacts are provided by histidine 4748, cysteine 4754, cysteine 4759, cysteine 4763, and cysteine 4940. A Nsp12 RNA-dependent RNA polymerase domain is found at 4818–5385 (RLSLKDLLLY…NMYLKSAVMQ (568 aa)). The tract at residues 4820-5034 (SLKDLLLYAA…HQKCLKSIAA (215 aa)) is rdRp Fingers N-ter. The segment at 5035–5073 (TRGVPVVIGTTKFYGGWDDMLRHLIKDVDNPVLMGWDYP) is rdRp Palm N-ter. One can recognise a RdRp catalytic domain in the interval 5065 to 5227 (PVLMGWDYPK…CYNSDYASKG (163 aa)). The segment at 5074–5132 (KCDRAMPNILRIVSSLVLARKHEFCCSHGDRFYRLANECAQVLSEIVMCGGCYYVKPGG) is rdRp Fingers C-ter. Histidine 5095, cysteine 5098, and cysteine 5099 together coordinate Zn(2+). The segment at 5133–5268 (TSSGDATTAF…TNGPHEFCSQ (136 aa)) is rdRp Palm C-ter. Active-site residues include serine 5212, aspartate 5213, and aspartate 5214. Positions 5269–5385 (HTMLVKIDGD…NMYLKSAVMQ (117 aa)) are rdRp Thumb. The CV ZBD domain occupies 5386-5498 (SVGACVVCSS…DDFNKIASCK (113 aa)). Zn(2+) contacts are provided by cysteine 5390, cysteine 5393, cysteine 5401, cysteine 5404, cysteine 5411, cysteine 5414, histidine 5418, histidine 5424, cysteine 5435, cysteine 5440, cysteine 5457, and histidine 5460. The region spanning 5641 to 5822 (SVPLVFQNNV…MCCLGPDIFL (182 aa)) is the (+)RNA virus helicase ATP-binding domain. Residue 5666-5673 (GPPGTGKS) participates in ATP binding. A (+)RNA virus helicase C-terminal domain is found at 5823–5992 (GNCYRCPKEI…TLPRLHCTTN (170 aa)). The ExoN domain occupies 6059 to 6274 (LFITKDEAIK…RCLAIYDCFC (216 aa)). Active-site residues include aspartate 6077, glutamate 6079, and glutamate 6178. Residues cysteine 6194, cysteine 6197, cysteine 6213, histidine 6216, histidine 6244, cysteine 6248, and histidine 6251 each coordinate Zn(2+). Catalysis depends on residues histidine 6255 and aspartate 6260. Cysteine 6266 provides a ligand contact to Zn(2+). Residues 6283–6509 (YPIISNEVSI…NLWNTFTTLQ (227 aa)) form the N7-MTase domain. 6318–6324 (DIGNPKG) serves as a coordination point for S-adenosyl-L-methionine. Residues 6396 to 6410 (CNGGSLYVNKHAFHT) form a gpppA-binding region. Residues cysteine 6434, cysteine 6455, cysteine 6466, and histidine 6469 each contribute to the Zn(2+) site. Residues 6510-6570 (SLENVIYNLV…NIAVELFTKR (61 aa)) enclose the Nsp15 N-terminal oligomerization domain. Positions 6571–6691 (SIRHHPELKI…FAMRKDGDDV (121 aa)) constitute an AV-Nsp11N/CoV-Nsp15M domain. Residues 6741-6880 (EPRSDLERDF…NDNKIMTFYP (140 aa)) form the NendoU domain. Catalysis depends on residues histidine 6771, histidine 6786, lysine 6826, lysine 6929, aspartate 7013, lysine 7053, and glutamate 7086. Residues 6885-7179 (TNDWKPGYSM…KEIFVGDSLV (295 aa)) form the Nidovirus-type SAM-dependent 2'-O-MTase domain.

Belongs to the coronaviruses polyprotein 1ab family. In terms of assembly, interacts with host PHB and PHB2. As to quaternary structure, interacts with papain-like protease nsp3 and non-structural protein 6. Monomer. Homodimer. Only the homodimer shows catalytic activity. In terms of assembly, interacts with nsp8 and nsp12 to form the replication-transcription complex (RTC): nsp12, nsp7, two subunits of nsp8, and up to two subunits of nsp13. As to quaternary structure, interacts with nsp7, nsp13 and nsp12 to form the replication-transcription complex (RTC): nsp12, nsp7, two subunits of nsp8, and up to two subunits of nsp13. Interacts with nsp12. In terms of assembly, interacts with proofreading exoribonuclease nsp14 and 2'-O-methyltransferase nsp16; these interactions enhance nsp14 and nsp16 enzymatic activities. As to quaternary structure, interacts with nsp7 and nsp8 to form the replication-transcription complex (RTC): nsp12, nsp7, two subunits of nsp8, and up to two subunits of nsp13. Interacts with nsp9. Interacts with nsp8 to form the replication-transcription complex (RTC): nsp12, nsp7, two subunits of nsp8, and up to two subunits of nsp13. The cofactor is Mn(2+). Mg(2+) is required as a cofactor. In terms of processing, specific enzymatic cleavages in vivo by its own proteases yield mature proteins. 3CL-PRO and PL-PRO proteinases are autocatalytically processed.

It is found in the host membrane. Its subcellular location is the host cytoplasm. The protein localises to the host perinuclear region. It localises to the host endoplasmic reticulum-Golgi intermediate compartment. The catalysed reaction is RNA(n) + a ribonucleoside 5'-triphosphate = RNA(n+1) + diphosphate. It carries out the reaction ATP + H2O = ADP + phosphate + H(+). The enzyme catalyses Thiol-dependent hydrolysis of ester, thioester, amide, peptide and isopeptide bonds formed by the C-terminal Gly of ubiquitin (a 76-residue protein attached to proteins as an intracellular targeting signal).. It catalyses the reaction a 5'-end (N(7)-methyl 5'-triphosphoguanosine)-ribonucleoside in mRNA + S-adenosyl-L-methionine = a 5'-end (N(7)-methyl 5'-triphosphoguanosine)-(2'-O-methyl-ribonucleoside) in mRNA + S-adenosyl-L-homocysteine + H(+). The catalysed reaction is uridylyl-uridylyl-ribonucleotide-RNA = a 3'-end uridylyl-2',3'-cyclophospho-uridine-RNA + a 5'-end dephospho-ribonucleoside-RNA. It carries out the reaction a 5'-end diphospho-ribonucleoside in mRNA + GTP + H(+) = a 5'-end (5'-triphosphoguanosine)-ribonucleoside in mRNA + diphosphate. The enzyme catalyses a 5'-end (5'-triphosphoguanosine)-ribonucleoside in mRNA + S-adenosyl-L-methionine = a 5'-end (N(7)-methyl 5'-triphosphoguanosine)-ribonucleoside in mRNA + S-adenosyl-L-homocysteine. Its function is as follows. The replicase polyprotein of coronaviruses is a multifunctional protein: it contains the activities necessary for the transcription of negative stranded RNA, leader RNA, subgenomic mRNAs and progeny virion RNA as well as proteinases responsible for the cleavage of the polyprotein into functional products. Inhibits host translation by interacting with the 40S ribosomal subunit. The nsp1-40S ribosome complex further induces an endonucleolytic cleavage near the 5'UTR of host mRNAs, targeting them for degradation. Viral mRNAs are not susceptible to nsp1-mediated endonucleolytic RNA cleavage thanks to the presence of a 5'-end leader sequence and are therefore protected from degradation. By suppressing host gene expression, nsp1 facilitates efficient viral gene expression in infected cells and evasion from host immune response. Functionally, may play a role in the modulation of host cell survival signaling pathway by interacting with host PHB and PHB2. Indeed, these two proteins play a role in maintaining the functional integrity of the mitochondria and protecting cells from various stresses. In terms of biological role, responsible for the cleavages located at the N-terminus of the replicase polyprotein. In addition, PL-PRO possesses a deubiquitinating/deISGylating activity and processes both 'Lys-48'- and 'Lys-63'-linked polyubiquitin chains from cellular substrates. Participates together with nsp4 in the assembly of virally-induced cytoplasmic double-membrane vesicles necessary for viral replication. Antagonizes innate immune induction of type I interferon by blocking the phosphorylation, dimerization and subsequent nuclear translocation of host IRF3. Also prevents host NF-kappa-B signaling. Its function is as follows. Participates in the assembly of virally-induced cytoplasmic double-membrane vesicles necessary for viral replication. Cleaves the C-terminus of replicase polyprotein at 11 sites. Recognizes substrates containing the core sequence [ILMVF]-Q-|-[SGACN]. Also able to bind an ADP-ribose-1''-phosphate (ADRP). Functionally, plays a role in the initial induction of autophagosomes from host endoplasmic reticulum. Later, limits the expansion of these phagosomes that are no longer able to deliver viral components to lysosomes. In terms of biological role, forms a hexadecamer with nsp8 (8 subunits of each) that may participate in viral replication by acting as a primase. Alternatively, may synthesize substantially longer products than oligonucleotide primers. Its function is as follows. Forms a hexadecamer with nsp7 (8 subunits of each) that may participate in viral replication by acting as a primase. Alternatively, may synthesize substantially longer products than oligonucleotide primers. Forms a primer, NSP9-pU, which is utilized by the polymerase for the initiation of RNA chains. Interacts with ribosome signal recognition particle RNA (SRP). Together with NSP8, suppress protein integration into the cell membrane, thereby disrupting host immune defenses. Functionally, plays a pivotal role in viral transcription by stimulating both nsp14 3'-5' exoribonuclease and nsp16 2'-O-methyltransferase activities. Therefore plays an essential role in viral mRNAs cap methylation. In terms of biological role, RNA-directed RNA polymerase that catalyzes the transcription of viral genomic and subgenomic RNAs. Acts in complex with nsp7 and nsp8 to transcribe both the minus and positive strands of genomic RNA. The kinase-like NiRAN domain of NSP12 attaches one or more nucleotides to the amino terminus of NSP9, forming a covalent RNA-protein intermediate that serves as transcription/replication primer. Subgenomic RNAs (sgRNAs) are formed by discontinuous transcription: The polymerase has the ability to pause at transcription-regulating sequences (TRS) and jump to the leader TRS, resulting in a major deletion. This creates a series of subgenomic RNAs that are replicated, transcribed and translated. In addition, Nsp12 is a subunit of the viral RNA capping enzyme that catalyzes the RNA guanylyltransferase reaction for genomic and sub-genomic RNAs. Subsequently, the NiRAN domain transfers RNA to GDP, and forms the core cap structure GpppA-RNA. Its function is as follows. Multi-functional protein with a zinc-binding domain in N-terminus displaying RNA and DNA duplex-unwinding activities with 5' to 3' polarity. Activity of helicase is dependent on magnesium. Plays a role in viral RNA synthesis through two distinct activities. The N7-guanine methyltransferase activity plays a role in the formation of the cap structure GpppA-RNA. The proofreading exoribonuclease reduces the sensitivity of the virus to RNA mutagens during replication. This activity acts on both ssRNA and dsRNA in a 3'-5' direction. Functionally, plays a role in viral transcription/replication and prevents the simultaneous activation of host cell dsRNA sensors, such as MDA5/IFIH1, OAS, and PKR. Acts by degrading the 5'-polyuridines generated during replication of the poly(A) region of viral genomic and subgenomic RNAs. Catalyzes a two-step reaction in which a 2'3'-cyclic phosphate (2'3'-cP) is first generated by 2'-O transesterification, which is then hydrolyzed to a 3'-phosphate (3'-P). If not degraded, poly(U) RNA would hybridize with poly(A) RNA tails and activate host dsRNA sensors. In terms of biological role, methyltransferase that mediates mRNA cap 2'-O-ribose methylation to the 5'-cap structure of viral mRNAs. N7-methyl guanosine cap is a prerequisite for binding of nsp16. Therefore plays an essential role in viral mRNAs cap methylation which is essential to evade immune system. This chain is Replicase polyprotein 1ab (rep), found in Human coronavirus HKU1 (isolate N1) (HCoV-HKU1).